Here is a 334-residue protein sequence, read N- to C-terminus: Histo-blood group ABO system transferase 2 (334 aa).

The Cytoplasmic segment spans residues 1–15; that stretch reads MKDLRFGRLKCYSLH. Residues 16-36 form a helical; Signal-anchor for type II membrane protein membrane-spanning segment; the sequence is LGILPLTVLVLVFFCFVCLSL. At 37–334 the chain is on the lumenal side; the sequence is RSQEWGHPGA…VPKNHQAIRN (298 aa). An N-linked (GlcNAc...) asparagine glycan is attached at asparagine 94. UDP-N-acetyl-alpha-D-galactosamine is bound by residues 102 to 104, tyrosine 107, and 192 to 194; these read FAV and DVD. Aspartate 192 and aspartate 194 together coordinate Mn(2+). The an alpha-L-fucosyl-(1-&gt;2)-beta-D-galactosyl derivative site is built by histidine 214, threonine 226, glutamate 284, and aspartate 307. The active-site Nucleophile is glutamate 284.

It belongs to the glycosyltransferase 6 family. Mn(2+) serves as cofactor. Large intestine, caecum, stomach, pancreas, submaxillary gland and kidney (at protein level). Ubiquitous.

It localises to the golgi apparatus. The protein localises to the golgi stack membrane. Its subcellular location is the secreted. The catalysed reaction is an alpha-L-fucosyl-(1-&gt;2)-beta-D-galactosyl derivative + UDP-N-acetyl-alpha-D-galactosamine = an N-acetyl-alpha-D-galactosaminyl-(1-&gt;3)-[alpha-L-fucosyl-(1-&gt;2)]-beta-D-galactosyl derivative + UDP + H(+). It carries out the reaction an alpha-L-fucosyl-(1-&gt;2)-beta-D-galactosyl derivative + UDP-alpha-D-galactose = an alpha-D-galactosyl-(1-&gt;3)-[alpha-L-fucosyl-(1-&gt;2)]-beta-D-galactosyl derivative + UDP + H(+). The protein operates within protein modification; protein glycosylation. Functionally, possesses strong B transferase activity and weak A transferase activity. This chain is Histo-blood group ABO system transferase 2 (Abo2), found in Rattus norvegicus (Rat).